Here is a 330-residue protein sequence, read N- to C-terminus: Virulence plasmid integrase pGP8-D (330 aa).

The Core-binding (CB) domain occupies 39–124; that stretch reads FSLFEVIMHW…SYISLTRFLN (86 aa). The Tyr recombinase domain occupies 152-327; it reads VKTNAMNRLQ…SREDNASKKM (176 aa). Catalysis depends on residues R189, K214, H279, R282, and H305. Y314 serves as the catalytic O-(3'-phospho-DNA)-tyrosine intermediate.

Belongs to the 'phage' integrase family.

This Chlamydia muridarum (strain MoPn / Nigg) protein is Virulence plasmid integrase pGP8-D.